Reading from the N-terminus, the 635-residue chain is Threonine--tRNA ligase (635 aa).

Positions 1-61 constitute a TGS domain; it reads MIKITLKDGK…HKDSSLEILT (61 aa). The segment at 242 to 532 is catalytic; sequence DHRKLGKELD…LIEQYAGAFP (291 aa). The Zn(2+) site is built by Cys333, His384, and His509.

This sequence belongs to the class-II aminoacyl-tRNA synthetase family. As to quaternary structure, homodimer. Zn(2+) is required as a cofactor.

It localises to the cytoplasm. The enzyme catalyses tRNA(Thr) + L-threonine + ATP = L-threonyl-tRNA(Thr) + AMP + diphosphate + H(+). In terms of biological role, catalyzes the attachment of threonine to tRNA(Thr) in a two-step reaction: L-threonine is first activated by ATP to form Thr-AMP and then transferred to the acceptor end of tRNA(Thr). Also edits incorrectly charged L-seryl-tRNA(Thr). The polypeptide is Threonine--tRNA ligase (Clostridium botulinum (strain Langeland / NCTC 10281 / Type F)).